Consider the following 197-residue polypeptide: 3-isopropylmalate dehydratase small subunit (197 aa).

The protein belongs to the LeuD family. LeuD type 1 subfamily. Heterodimer of LeuC and LeuD.

The enzyme catalyses (2R,3S)-3-isopropylmalate = (2S)-2-isopropylmalate. It participates in amino-acid biosynthesis; L-leucine biosynthesis; L-leucine from 3-methyl-2-oxobutanoate: step 2/4. Its function is as follows. Catalyzes the isomerization between 2-isopropylmalate and 3-isopropylmalate, via the formation of 2-isopropylmaleate. This Azobacteroides pseudotrichonymphae genomovar. CFP2 protein is 3-isopropylmalate dehydratase small subunit.